We begin with the raw amino-acid sequence, 286 residues long: Lipoyl synthase (286 aa).

[4Fe-4S] cluster-binding residues include Cys-38, Cys-43, Cys-49, Cys-64, Cys-68, Cys-71, and Ser-276. The region spanning 50–265 (WEQGVATFMI…ENIALDMGFL (216 aa)) is the Radical SAM core domain.

It belongs to the radical SAM superfamily. Lipoyl synthase family. [4Fe-4S] cluster serves as cofactor.

It is found in the cytoplasm. The enzyme catalyses [[Fe-S] cluster scaffold protein carrying a second [4Fe-4S](2+) cluster] + N(6)-octanoyl-L-lysyl-[protein] + 2 oxidized [2Fe-2S]-[ferredoxin] + 2 S-adenosyl-L-methionine + 4 H(+) = [[Fe-S] cluster scaffold protein] + N(6)-[(R)-dihydrolipoyl]-L-lysyl-[protein] + 4 Fe(3+) + 2 hydrogen sulfide + 2 5'-deoxyadenosine + 2 L-methionine + 2 reduced [2Fe-2S]-[ferredoxin]. Its pathway is protein modification; protein lipoylation via endogenous pathway; protein N(6)-(lipoyl)lysine from octanoyl-[acyl-carrier-protein]: step 2/2. Catalyzes the radical-mediated insertion of two sulfur atoms into the C-6 and C-8 positions of the octanoyl moiety bound to the lipoyl domains of lipoate-dependent enzymes, thereby converting the octanoylated domains into lipoylated derivatives. This is Lipoyl synthase from Karelsulcia muelleri (strain GWSS) (Sulcia muelleri).